A 110-amino-acid chain; its full sequence is BET1-like protein (110 aa).

The Cytoplasmic segment spans residues 1–85 (MADPWNRGHG…MVRSGRDNRK (85 aa)). The t-SNARE coiled-coil homology domain maps to 14 to 76 (DMLDAENKRM…TGSVKRFSTM (63 aa)). A helical; Anchor for type IV membrane protein membrane pass occupies residues 86–106 (ILCYVSVGLVVAFFLLYYLVS). The Lumenal segment spans residues 107 to 110 (RMQN).

As to quaternary structure, component of a SNARE complex consisting of stx5, ykt6, gosr2 and bet1l.

The protein resides in the golgi apparatus membrane. Functionally, vesicle SNARE required for targeting and fusion of retrograde transport vesicles with the Golgi complex. Required for the integrity of the Golgi complex. The chain is BET1-like protein (bet1l) from Danio rerio (Zebrafish).